A 57-amino-acid chain; its full sequence is uncharacterized protein (57 aa).

A helical transmembrane segment spans residues 12–34 (VIAVLSLFVFAVAVFFVGMALLT).

The protein localises to the membrane. This is an uncharacterized protein from Pasteurella multocida (strain Pm70).